Here is a 170-residue protein sequence, read N- to C-terminus: Translationally-controlled tumor protein homolog (170 aa).

Residues Met1–Val170 form the TCTP domain.

The protein belongs to the TCTP family.

It localises to the cytoplasm. It is found in the cytoskeleton. In terms of biological role, involved in protein synthesis. Involved in microtubule stabilization. This is Translationally-controlled tumor protein homolog from Gibberella zeae (strain ATCC MYA-4620 / CBS 123657 / FGSC 9075 / NRRL 31084 / PH-1) (Wheat head blight fungus).